A 167-amino-acid chain; its full sequence is Ribosome maturation factor RimP (167 aa).

Belongs to the RimP family.

The protein resides in the cytoplasm. Functionally, required for maturation of 30S ribosomal subunits. This is Ribosome maturation factor RimP from Cytophaga hutchinsonii (strain ATCC 33406 / DSM 1761 / CIP 103989 / NBRC 15051 / NCIMB 9469 / D465).